A 390-amino-acid chain; its full sequence is Peroxisomal sarcosine oxidase (390 aa).

9 to 39 is an FAD binding site; that stretch reads DAIVIGAGIQGCFTAYHLAKHSKSVLLLEQF. Residues K126 and K287 each carry the N6-acetyllysine modification. C319 carries the S-8alpha-FAD cysteine modification. The short motif at 388–390 is the Microbody targeting signal element; sequence AHL.

This sequence belongs to the MSOX/MTOX family. FAD serves as cofactor. As to expression, kidney and liver.

The protein localises to the peroxisome. It catalyses the reaction sarcosine + O2 + H2O = formaldehyde + glycine + H2O2. It carries out the reaction L-pipecolate + O2 = L-1-piperideine-6-carboxylate + H2O2 + H(+). In terms of biological role, metabolizes sarcosine, L-pipecolic acid and L-proline. The sequence is that of Peroxisomal sarcosine oxidase (Pipox) from Mus musculus (Mouse).